We begin with the raw amino-acid sequence, 347 residues long: Probable arabinogalactan endo-beta-1,4-galactanase A (347 aa).

A signal peptide spans 1–16 (MLFSYLLATLPLLANA). Glu150 functions as the Proton donor in the catalytic mechanism. Catalysis depends on Glu260, which acts as the Nucleophile.

Belongs to the glycosyl hydrolase 53 family.

The protein localises to the secreted. The catalysed reaction is The enzyme specifically hydrolyzes (1-&gt;4)-beta-D-galactosidic linkages in type I arabinogalactans.. Its function is as follows. Endogalactanase involved in the degradation of plant cell wall polysaccharides, and more particularly of hairy regions of pectin. This chain is Probable arabinogalactan endo-beta-1,4-galactanase A (galA), found in Aspergillus oryzae (strain ATCC 42149 / RIB 40) (Yellow koji mold).